Reading from the N-terminus, the 546-residue chain is CTP synthase (546 aa).

An amidoligase domain region spans residues 1–266 (MARYIFITGG…DTEVLDVFGL (266 aa)). Serine 13 contributes to the CTP binding site. A UTP-binding site is contributed by serine 13. 14–19 (SLGKGL) contributes to the ATP binding site. An L-glutamine-binding site is contributed by tyrosine 54. An ATP-binding site is contributed by aspartate 71. Mg(2+) is bound by residues aspartate 71 and glutamate 140. CTP-binding positions include 147 to 149 (DIE), 187 to 192 (KTKPTQ), and lysine 223. Residues 187–192 (KTKPTQ) and lysine 223 contribute to the UTP site. A Glutamine amidotransferase type-1 domain is found at 293-545 (NIAIVGKYTG…IGAAKERSRL (253 aa)). L-glutamine is bound at residue alanine 357. Residue cysteine 384 is the Nucleophile; for glutamine hydrolysis of the active site. L-glutamine contacts are provided by residues 385 to 388 (FGMQ), glutamate 408, and arginine 473. Catalysis depends on residues histidine 518 and glutamate 520.

This sequence belongs to the CTP synthase family. As to quaternary structure, homotetramer.

It carries out the reaction UTP + L-glutamine + ATP + H2O = CTP + L-glutamate + ADP + phosphate + 2 H(+). The catalysed reaction is L-glutamine + H2O = L-glutamate + NH4(+). It catalyses the reaction UTP + NH4(+) + ATP = CTP + ADP + phosphate + 2 H(+). It functions in the pathway pyrimidine metabolism; CTP biosynthesis via de novo pathway; CTP from UDP: step 2/2. Its activity is regulated as follows. Allosterically activated by GTP, when glutamine is the substrate; GTP has no effect on the reaction when ammonia is the substrate. The allosteric effector GTP functions by stabilizing the protein conformation that binds the tetrahedral intermediate(s) formed during glutamine hydrolysis. Inhibited by the product CTP, via allosteric rather than competitive inhibition. In terms of biological role, catalyzes the ATP-dependent amination of UTP to CTP with either L-glutamine or ammonia as the source of nitrogen. Regulates intracellular CTP levels through interactions with the four ribonucleotide triphosphates. The protein is CTP synthase of Phenylobacterium zucineum (strain HLK1).